The sequence spans 1437 residues: Histone-lysine N-methyltransferase NSD3 (1437 aa).

Disordered stretches follow at residues 121 to 157 (PHEILEKPSPPQPPPPPSVPQTVIPKKTGSPEIKLKI) and 181 to 252 (QASE…PVQP). A compositionally biased stretch (pro residues) spans 128 to 139 (PSPPQPPPPPSV). Ser-150 is modified (phosphoserine). A KIKL motif is present at residues 154–157 (KLKI). The span at 187 to 201 (KSKHESRKEKRKKSN) shows a compositional bias: basic residues. The segment covering 202-248 (KHDSSRSEERKSHKIPKLEPEEQNRPNERVDTVSEKPREEPVLKEEA) has biased composition (basic and acidic residues). Glycyl lysine isopeptide (Lys-Gly) (interchain with G-Cter in SUMO2) cross-links involve residues Lys-218 and Lys-245. The PWWP 1 domain occupies 270-333 (VGDLVWSKVG…EKRVREYKGH (64 aa)). Disordered regions lie at residues 344-365 (TKQASNHSEKQKIRKPRPQRER) and 406-465 (AKKS…EPPP). Lys-413 participates in a covalent cross-link: Glycyl lysine isopeptide (Lys-Gly) (interchain with G-Cter in SUMO2). The span at 425–445 (VLNTQPEQTNAGEVASSLSST) shows a compositional bias: polar residues. Ser-457 bears the Phosphoserine mark. Residues Lys-502 and Lys-532 each participate in a glycyl lysine isopeptide (Lys-Gly) (interchain with G-Cter in SUMO2) cross-link. Residues 540-696 (QDRLIISTPN…DSSLSRRGTG (157 aa)) are disordered. Residues 546-571 (STPNQRNEKPTQSVSSPEATSGSTGS) show a composition bias toward polar residues. Positions 583–595 (TRSESEKSTEVVP) are enriched in basic and acidic residues. A phosphoserine mark is found at Ser-585, Ser-587, and Ser-590. Lys-628 participates in a covalent cross-link: Glycyl lysine isopeptide (Lys-Gly) (interchain with G-Cter in SUMO2). Ser-655 is modified (phosphoserine). The span at 682 to 692 (DVQSMDSSLSR) shows a compositional bias: polar residues. PHD-type zinc fingers lie at residues 701–748 (DTVC…CKTG), 749–805 (QHPC…CSME), and 862–955 (VGFC…CKAG). Lys-790 is modified (N6-acetyllysine). Positions 960–1022 (YKQIVWVKLG…QGRVFPYVEG (63 aa)) constitute a PWWP 2 domain. The stretch at 1033-1069 (INKTFKKALEEAAKRFQELKAQRESKEALEIEKNSRK) forms a coiled coil. One can recognise an AWS domain in the interval 1093 to 1143 (SEIPRCNCKPADENPCGLESECLNRMLQYECHPQVCPAGDRCQNQCFTKRL). Positions 1145–1262 (PDAEIIKTER…AGMELTFNYN (118 aa)) constitute an SET domain. Lys-1151 participates in a covalent cross-link: Glycyl lysine isopeptide (Lys-Gly) (interchain with G-Cter in SUMO2). The region spanning 1269 to 1285 (GRTECHCGADNCSGFLG) is the Post-SET domain. The segment at 1321-1368 (EDYCFQCGDGGELVMCDKKDCPKAYHLLCLNLTQPPYGKWECPWHQCD) adopts a PHD-type 4; atypical zinc-finger fold.

Belongs to the class V-like SAM-binding methyltransferase superfamily. Histone-lysine methyltransferase family. SET2 subfamily. As to quaternary structure, interacts with BRD4. Interacts (via KIKL motif) with BRD3 (via NET domain). Highly expressed in brain, heart and skeletal muscle. Expressed at lower level in liver and lung.

The protein resides in the nucleus. It localises to the chromosome. It catalyses the reaction L-lysyl(4)-[histone H3] + 2 S-adenosyl-L-methionine = N(6),N(6)-dimethyl-L-lysyl(4)-[histone H3] + 2 S-adenosyl-L-homocysteine + 2 H(+). The enzyme catalyses L-lysyl(27)-[histone H3] + 2 S-adenosyl-L-methionine = N(6),N(6)-dimethyl-L-lysyl(27)-[histone H3] + 2 S-adenosyl-L-homocysteine + 2 H(+). Functionally, histone methyltransferase. Preferentially dimethylates 'Lys-4' and 'Lys-27' of histone H3 forming H3K4me2 and H3K27me2. H3 'Lys-4' methylation represents a specific tag for epigenetic transcriptional activation, while 'Lys-27' is a mark for transcriptional repression. The sequence is that of Histone-lysine N-methyltransferase NSD3 from Homo sapiens (Human).